We begin with the raw amino-acid sequence, 419 residues long: Pygopus homolog 1 (419 aa).

2 disordered regions span residues 1–64 and 175–338; these read MPAE…PNSD and HFRQ…SSSD. The span at 18–30 shows a compositional bias: gly residues; the sequence is GDSGLDGLGGPGV. Positions 35–41 match the Nuclear localization signal motif; the sequence is PDKKKRK. Composition is skewed to polar residues over residues 175–221 and 240–255; these read HFRQ…SNHS and DFTQ…NSSA. The segment covering 276–286 has biased composition (low complexity); it reads VNRNNAVNQEN. Residues 287 to 307 are compositionally biased toward polar residues; sequence SRSSSTEATNNNPANGTQNKP. The PHD-type zinc-finger motif lies at 340 to 398; the sequence is VYPCGICTNEVNDDQDAILCEASCQKWFHRICTGMTETAYGLLTAEASAVWGCDTCMAD. The segment at 341 to 388 is interaction with H3K4me2; it reads YPCGICTNEVNDDQDAILCEASCQKWFHRICTGMTETAYGLLTAEASA. The interval 373–391 is interaction with BCL9; sequence GMTETAYGLLTAEASAVWG.

Interacts with BCL9 via The PHD-type zinc finger motiv, and thereby becomes part of the nuclear beta-catenin/TCF complex. Identified in a complex with BCL9L, CDC73, CTNNB1 and PYGO1. Interacts with histone H3 mono-, di- or tri-methylated at 'Lys4' (H3K4me1, H3K4me2, H3K4me3); the interaction is enhanced by the interaction with BCL9.

Its subcellular location is the nucleus. Involved in signal transduction through the Wnt pathway. The chain is Pygopus homolog 1 (PYGO1) from Homo sapiens (Human).